Consider the following 101-residue polypeptide: MYAIIKASGQQFKVQEGDIICFDNMGLEPKSAVEFKEVLAVDNGELTVGTPFVEGAVVKGEVINEGRDKKVIIYKKRRRKDSKLKRGFRRDFTRVRITKIA.

This sequence belongs to the bacterial ribosomal protein bL21 family. As to quaternary structure, part of the 50S ribosomal subunit. Contacts protein L20.

This protein binds to 23S rRNA in the presence of protein L20. This is Large ribosomal subunit protein bL21 from Sulfurovum sp. (strain NBC37-1).